The following is a 583-amino-acid chain: 15-cis-phytoene desaturase, chloroplastic/chromoplastic (583 aa).

The N-terminal 111 residues, 1 to 111, are a transit peptide targeting the chloroplast and chromoplast; it reads MPQIGLVSAV…FRASPRPTKP (111 aa). Residues 118–134, 141–142, lysine 149, 166–167, and tyrosine 172 contribute to the FAD site; these read GAGL…ADAG, EA, and HI. Residue arginine 307 participates in substrate binding. Isoleucine 349 and aspartate 538 together coordinate FAD. Alanine 546 contacts substrate. An FAD-binding site is contributed by methionine 548.

It belongs to the carotenoid/retinoid oxidoreductase family. Homotetramer. The cofactor is FAD.

It localises to the plastid. It is found in the chloroplast. The protein localises to the chromoplast. Its subcellular location is the membrane. The enzyme catalyses 2 a plastoquinone + 15-cis-phytoene = 9,9',15-tri-cis-zeta-carotene + 2 a plastoquinol. Its pathway is carotenoid biosynthesis; lycopene biosynthesis. In terms of biological role, converts phytoene into zeta-carotene via the intermediary of phytofluene by the symmetrical introduction of two double bonds at the C-11 and C-11' positions of phytoene with a concomitant isomerization of two neighboring double bonds at the C9 and C9' positions from trans to cis. This Solanum lycopersicum (Tomato) protein is 15-cis-phytoene desaturase, chloroplastic/chromoplastic (PDS).